Consider the following 159-residue polypeptide: Transcriptional repressor NrdR (159 aa).

A zinc finger spans residues 3–34; sequence CPFCHTPDTSVIDSRVSEEGDRIRRRRRCPHC. Residues 49–139 enclose the ATP-cone domain; the sequence is PQVVKQDGNR…VYRSFQGAAD (91 aa).

It belongs to the NrdR family. Zn(2+) serves as cofactor.

Functionally, negatively regulates transcription of bacterial ribonucleotide reductase nrd genes and operons by binding to NrdR-boxes. This chain is Transcriptional repressor NrdR, found in Nitrosospira multiformis (strain ATCC 25196 / NCIMB 11849 / C 71).